The chain runs to 804 residues: Pentatricopeptide repeat-containing protein At4g35130, chloroplastic (804 aa).

The N-terminal 19 residues, 1 to 19 (MAATLLSQCYRIYNSDACK), are a transit peptide targeting the chloroplast. PPR repeat units follow at residues 63-93 (NDPALTRALRGFADSRLMEDALQLFDEMNKA), 94-128 (DAFLWNVMIKGFTSCGLYIEAVQFYSRMVFAGVKA), 129-163 (DTFTYPFVIKSVAGISSLEEGKKIHAMVIKLGFVS), 164-194 (DVYVCNSLISLYMKLGCAWDAEKVFEEMPER), 195-229 (DIVSWNSMISGYLALGDGFSSLMLFKEMLKCGFKP), 230-264 (DRFSTMSALGACSHVYSPKMGKEIHCHAVRSRIET), 266-296 (DVMVMTSILDMYSKYGEVSYAERIFNGMIQR), 297-332 (NIVAWNVMIGCYARNGRVTDAFLCFQKMSEQNGLQP), 333-363 (DVITSINLLPASAILEGRTIHGYAMRRGFLP), 364-394 (HMVLETALIDMYGECGQLKSAEVIFDRMAEK), 395-429 (NVISWNSIIAAYVQNGKNYSALELFQELWDSSLVP), 430-464 (DSTTIASILPAYAESLSLSEGREIHAYIVKSRYWS), 465-495 (NTIILNSLVHMYAMCGDLEDARKCFNHILLK), 496-530 (DVVSWNSIIMAYAVHGFGRISVWLFSEMIASRVNP), 531-561 (NKSTFASLLAACSISGMVDEGWEYFESMKRE), and 567-597 (GIEHYGCMLDLIGRTGNFSAAKRFLEEMPFV). Residues 602 to 677 (IWGSLLNASR…TSSRSTVEAK (76 aa)) form a type E motif region. Residues 678–708 (GKSHVFTNGDRSHVATNKIYEVLDVVSRMVG) are type E(+) motif. The type DYW motif stretch occupies residues 710–804 (EDIYVHCVSR…NGRCSCGNYW (95 aa)).

The protein belongs to the PPR family. PCMP-H subfamily.

It is found in the plastid. It localises to the chloroplast. The chain is Pentatricopeptide repeat-containing protein At4g35130, chloroplastic (PCMP-H27) from Arabidopsis thaliana (Mouse-ear cress).